Here is a 478-residue protein sequence, read N- to C-terminus: Glutamate-1-semialdehyde 2,1-aminomutase, chloroplastic (478 aa).

At Lys-318 the chain carries N6-(pyridoxal phosphate)lysine.

This sequence belongs to the class-III pyridoxal-phosphate-dependent aminotransferase family. HemL subfamily. As to quaternary structure, homodimer. Pyridoxal 5'-phosphate is required as a cofactor.

It is found in the plastid. It localises to the chloroplast. The catalysed reaction is (S)-4-amino-5-oxopentanoate = 5-aminolevulinate. It participates in porphyrin-containing compound metabolism; protoporphyrin-IX biosynthesis; 5-aminolevulinate from L-glutamyl-tRNA(Glu): step 2/2. Its pathway is porphyrin-containing compound metabolism; chlorophyll biosynthesis. The sequence is that of Glutamate-1-semialdehyde 2,1-aminomutase, chloroplastic (GSA) from Nicotiana tabacum (Common tobacco).